The sequence spans 176 residues: Cytochrome b (176 aa).

3 helical membrane passes run 33–53 (FGSL…FLAM), 77–98 (WLLR…YLHI), and 113–133 (WNVG…GYVL). The heme b site is built by His-83 and His-97.

This sequence belongs to the cytochrome b family. In terms of assembly, the cytochrome bc1 complex contains 11 subunits: 3 respiratory subunits (MT-CYB, CYC1 and UQCRFS1), 2 core proteins (UQCRC1 and UQCRC2) and 6 low-molecular weight proteins (UQCRH/QCR6, UQCRB/QCR7, UQCRQ/QCR8, UQCR10/QCR9, UQCR11/QCR10 and a cleavage product of UQCRFS1). This cytochrome bc1 complex then forms a dimer. Heme b serves as cofactor.

It localises to the mitochondrion inner membrane. Its function is as follows. Component of the ubiquinol-cytochrome c reductase complex (complex III or cytochrome b-c1 complex) that is part of the mitochondrial respiratory chain. The b-c1 complex mediates electron transfer from ubiquinol to cytochrome c. Contributes to the generation of a proton gradient across the mitochondrial membrane that is then used for ATP synthesis. This Eumops glaucinus (Wagner's mastiff bat) protein is Cytochrome b (MT-CYB).